Reading from the N-terminus, the 156-residue chain is Transcription elongation factor GreA (156 aa).

Residues 2 to 27 (EKTFPMTKEGLDKLKAELENLKLVKR) are a coiled coil.

It belongs to the GreA/GreB family.

Necessary for efficient RNA polymerase transcription elongation past template-encoded arresting sites. The arresting sites in DNA have the property of trapping a certain fraction of elongating RNA polymerases that pass through, resulting in locked ternary complexes. Cleavage of the nascent transcript by cleavage factors such as GreA or GreB allows the resumption of elongation from the new 3'terminus. GreA releases sequences of 2 to 3 nucleotides. This is Transcription elongation factor GreA from Lactococcus lactis subsp. cremoris (strain SK11).